Consider the following 344-residue polypeptide: Plastoglobule-localized metallopeptidase 48, chloroplastic (344 aa).

The N-terminal 47 residues, M1–G47, are a transit peptide targeting the chloroplast. 2 helical membrane passes run L102 to V122 and F169 to L189. Position 191 (H191) interacts with Zn(2+). E192 is an active-site residue. Position 195 (H195) interacts with Zn(2+). A helical transmembrane segment spans residues G201–G221. Residue E240 participates in Zn(2+) binding. Residues V256–A272 form a helical membrane-spanning segment.

The protein belongs to the peptidase M48 family. M48D subfamily. Interacts with plastoglobule (PG) core proteins ABC1K3, PES1 and CCD4. It depends on Zn(2+) as a cofactor. Mostly expressed in flowers (e.g. sepals, petals and stamen), seeds, leaves and cotyledons.

It is found in the plastid. The protein resides in the chloroplast. The protein localises to the plastoglobule. It localises to the chloroplast membrane. Metalloendopeptidase with a Zn-dependent proteolytic activity and substrate cleavage upstream of hydrophobic residues. Positive regulator of senescence, probably by degrading CCD4, thus participating in the controlled removal of carotenoids from the thylakoid membrane during the senescence process. This Arabidopsis thaliana (Mouse-ear cress) protein is Plastoglobule-localized metallopeptidase 48, chloroplastic.